A 376-amino-acid polypeptide reads, in one-letter code: 23S rRNA (uracil(747)-C(5))-methyltransferase RlmC (376 aa).

[4Fe-4S] cluster contacts are provided by Cys-3, Cys-11, Cys-14, and Cys-87. Positions 212, 241, 262, and 307 each coordinate S-adenosyl-L-methionine. The active-site Nucleophile is the Cys-334.

Belongs to the class I-like SAM-binding methyltransferase superfamily. RNA M5U methyltransferase family. RlmC subfamily.

It catalyses the reaction uridine(747) in 23S rRNA + S-adenosyl-L-methionine = 5-methyluridine(747) in 23S rRNA + S-adenosyl-L-homocysteine + H(+). Catalyzes the formation of 5-methyl-uridine at position 747 (m5U747) in 23S rRNA. This is 23S rRNA (uracil(747)-C(5))-methyltransferase RlmC from Pectobacterium carotovorum subsp. carotovorum (strain PC1).